The following is a 99-amino-acid chain: Aspartyl/glutamyl-tRNA(Asn/Gln) amidotransferase subunit C (99 aa).

Belongs to the GatC family. Heterotrimer of A, B and C subunits.

It catalyses the reaction L-glutamyl-tRNA(Gln) + L-glutamine + ATP + H2O = L-glutaminyl-tRNA(Gln) + L-glutamate + ADP + phosphate + H(+). The catalysed reaction is L-aspartyl-tRNA(Asn) + L-glutamine + ATP + H2O = L-asparaginyl-tRNA(Asn) + L-glutamate + ADP + phosphate + 2 H(+). Allows the formation of correctly charged Asn-tRNA(Asn) or Gln-tRNA(Gln) through the transamidation of misacylated Asp-tRNA(Asn) or Glu-tRNA(Gln) in organisms which lack either or both of asparaginyl-tRNA or glutaminyl-tRNA synthetases. The reaction takes place in the presence of glutamine and ATP through an activated phospho-Asp-tRNA(Asn) or phospho-Glu-tRNA(Gln). The polypeptide is Aspartyl/glutamyl-tRNA(Asn/Gln) amidotransferase subunit C (Polaromonas naphthalenivorans (strain CJ2)).